The sequence spans 247 residues: tRNA uridine(34) hydroxylase (247 aa).

One can recognise a Rhodanese domain in the interval 124-218 (TKQNVIVIDT…YLEDTHNKNN (95 aa)). C178 (cysteine persulfide intermediate) is an active-site residue.

It belongs to the TrhO family.

It carries out the reaction uridine(34) in tRNA + AH2 + O2 = 5-hydroxyuridine(34) in tRNA + A + H2O. In terms of biological role, catalyzes oxygen-dependent 5-hydroxyuridine (ho5U) modification at position 34 in tRNAs. The protein is tRNA uridine(34) hydroxylase of Rickettsia typhi (strain ATCC VR-144 / Wilmington).